Reading from the N-terminus, the 378-residue chain is Erythronate-4-phosphate dehydrogenase (378 aa).

Residues serine 45 and threonine 66 each contribute to the substrate site. The NAD(+) site is built by aspartate 146 and threonine 175. Arginine 208 is an active-site residue. Aspartate 232 provides a ligand contact to NAD(+). Glutamate 237 is a catalytic residue. Histidine 254 acts as the Proton donor in catalysis. Glycine 257 lines the NAD(+) pocket. Residue tyrosine 258 coordinates substrate.

It belongs to the D-isomer specific 2-hydroxyacid dehydrogenase family. PdxB subfamily. In terms of assembly, homodimer.

The protein resides in the cytoplasm. It catalyses the reaction 4-phospho-D-erythronate + NAD(+) = (R)-3-hydroxy-2-oxo-4-phosphooxybutanoate + NADH + H(+). The protein operates within cofactor biosynthesis; pyridoxine 5'-phosphate biosynthesis; pyridoxine 5'-phosphate from D-erythrose 4-phosphate: step 2/5. Catalyzes the oxidation of erythronate-4-phosphate to 3-hydroxy-2-oxo-4-phosphonooxybutanoate. The sequence is that of Erythronate-4-phosphate dehydrogenase from Escherichia coli (strain K12 / MC4100 / BW2952).